A 357-amino-acid chain; its full sequence is MSDKTPRKPTAFRLEQPARVSAASEQEEPRRPRAVKDLEQITPQADVFDLTDDEAAELEILDPAFEAPERKGWSLSRILFGALGILVSFAIGIWTEDLIRALFARADWLGWTALGVAMVALAAFAAIILRELVALRRLASVQHLRKDAADAAERDDMAAARKAVDALRTIAAGIPETAKGRQLLDSLTDDIIDGRDLIRLAETEILRPLDREARTLVLNASKRVSIVTAISPRALVDIGYVIFESTRLIRRLSQLYGGRPGTLGFIKFARRVIAHLAVTGTIAMGDSVIQQLVGHGLASRLSAKLGEGVVNGLMTARIGIAAMDVVRPFPFNAEKRPGIGDFIGDLARLNSDRNARK.

Positions 1–36 (MSDKTPRKPTAFRLEQPARVSAASEQEEPRRPRAVK) are disordered. The span at 27–36 (EEPRRPRAVK) shows a compositional bias: basic and acidic residues. Transmembrane regions (helical) follow at residues 78–98 (ILFG…TEDL) and 109–129 (LGWT…AIIL).

This sequence belongs to the UPF0283 family.

Its subcellular location is the cell inner membrane. This Brucella abortus (strain S19) protein is UPF0283 membrane protein BAbS19_I09770.